We begin with the raw amino-acid sequence, 120 residues long: NAD(P)H-quinone oxidoreductase subunit 3, chloroplastic (120 aa).

The next 3 helical transmembrane spans lie at 9 to 29 (IFWAFLIISSVIPILAFLISG), 64 to 84 (MFALVFVVFDVETVFLYPWAM), and 88 to 108 (VLGVSVFVEALIFVLILIVGL).

The protein belongs to the complex I subunit 3 family. In terms of assembly, NDH is composed of at least 16 different subunits, 5 of which are encoded in the nucleus.

It localises to the plastid. It is found in the chloroplast thylakoid membrane. The catalysed reaction is a plastoquinone + NADH + (n+1) H(+)(in) = a plastoquinol + NAD(+) + n H(+)(out). It carries out the reaction a plastoquinone + NADPH + (n+1) H(+)(in) = a plastoquinol + NADP(+) + n H(+)(out). In terms of biological role, NDH shuttles electrons from NAD(P)H:plastoquinone, via FMN and iron-sulfur (Fe-S) centers, to quinones in the photosynthetic chain and possibly in a chloroplast respiratory chain. The immediate electron acceptor for the enzyme in this species is believed to be plastoquinone. Couples the redox reaction to proton translocation, and thus conserves the redox energy in a proton gradient. The chain is NAD(P)H-quinone oxidoreductase subunit 3, chloroplastic from Ranunculus macranthus (Large buttercup).